Reading from the N-terminus, the 183-residue chain is Potassium-transporting ATPase KdpC subunit (183 aa).

The chain crosses the membrane as a helical span at residues 10 to 30 (LTVFTLILFAVIYPLAIYGIA).

The protein belongs to the KdpC family. The system is composed of three essential subunits: KdpA, KdpB and KdpC.

Its subcellular location is the cell inner membrane. Functionally, part of the high-affinity ATP-driven potassium transport (or Kdp) system, which catalyzes the hydrolysis of ATP coupled with the electrogenic transport of potassium into the cytoplasm. This subunit acts as a catalytic chaperone that increases the ATP-binding affinity of the ATP-hydrolyzing subunit KdpB by the formation of a transient KdpB/KdpC/ATP ternary complex. The chain is Potassium-transporting ATPase KdpC subunit from Flavobacterium johnsoniae (strain ATCC 17061 / DSM 2064 / JCM 8514 / BCRC 14874 / CCUG 350202 / NBRC 14942 / NCIMB 11054 / UW101) (Cytophaga johnsonae).